We begin with the raw amino-acid sequence, 218 residues long: Small ribosomal subunit protein uS3 (218 aa).

A KH type-2 domain is found at 38–106 (IRKFIATKLA…RVHINIVEIK (69 aa)).

This sequence belongs to the universal ribosomal protein uS3 family. In terms of assembly, part of the 30S ribosomal subunit. Forms a tight complex with proteins S10 and S14.

Functionally, binds the lower part of the 30S subunit head. Binds mRNA in the 70S ribosome, positioning it for translation. This chain is Small ribosomal subunit protein uS3, found in Enterococcus faecalis (strain ATCC 700802 / V583).